A 147-amino-acid chain; its full sequence is Ubiquitin-conjugating enzyme E2 D2 (147 aa).

In terms of domain architecture, UBC core spans 1-147; that stretch reads MALKRIHKEL…SREWTQKYAM (147 aa). Residue Cys85 is the Glycyl thioester intermediate of the active site.

It belongs to the ubiquitin-conjugating enzyme family. In terms of assembly, interacts with SCF (SKP1-CUL1-F-box protein) E3 ubiquitin ligase complex. Interacts with CNOT4 (via RING domain). Interacts with E3 ubiquitin-protein ligases CBLC, PJA1 and PJA2. Interacts with PDZRN3. Interacts with PPP1R11. Interacts with E3 ubiquitin-protein ligase PHF7; the interaction inhibits cleavage of PHF7 and promotes association of the complex with the nucleosome core particle.

It carries out the reaction S-ubiquitinyl-[E1 ubiquitin-activating enzyme]-L-cysteine + [E2 ubiquitin-conjugating enzyme]-L-cysteine = [E1 ubiquitin-activating enzyme]-L-cysteine + S-ubiquitinyl-[E2 ubiquitin-conjugating enzyme]-L-cysteine.. It catalyses the reaction S-ubiquitinyl-[E1 ubiquitin-activating enzyme]-L-cysteine + [acceptor protein]-L-lysine = [E1 ubiquitin-activating enzyme]-L-cysteine + N(6)-monoubiquitinyl-[acceptor protein]-L-lysine.. It functions in the pathway protein modification; protein ubiquitination. Functionally, accepts ubiquitin from the E1 complex and catalyzes its covalent attachment to other proteins. In vitro catalyzes 'Lys-48'-linked polyubiquitination. Mediates the selective degradation of short-lived and abnormal proteins. Functions in the E6/E6-AP-induced ubiquitination of p53/TP53. Mediates ubiquitination of PEX5 and SQSTM1 and autoubiquitination of STUB1 and TRAF6. Involved in the signal-induced conjugation and subsequent degradation of NFKBIA, FBXW2-mediated GCM1 ubiquitination and degradation, MDM2-dependent degradation of p53/TP53 and the activation of MAVS in the mitochondria by RIGI in response to viral infection. Essential for viral activation of IRF3. This is Ubiquitin-conjugating enzyme E2 D2 (UBE2D2) from Sus scrofa (Pig).